The chain runs to 1426 residues: ABC transporter G family member 31 (1426 aa).

Residues 142–415 form the ABC transporter 1 domain; sequence LRHLRIYRGG…FAGMGFRCPE (274 aa). 175–182 is an ATP binding site; sequence GPPSSGKT. The ABC transmembrane type-2 1 domain occupies 493-706; sequence ELLKSNFQWQ…AQNAISVNEF (214 aa). 7 helical membrane passes run 511-531, 544-564, 592-612, 630-650, 655-675, 681-701, and 741-761; these read FIYV…MTVF, GIIY…NGFT, LPSW…WVLV, FLLL…MASL, IVAN…GGFI, IPAW…QNAI, and IGVG…TLFL. The region spanning 824–1076 is the ABC transporter 2 domain; it reads MCFKNINYYV…NLVEFFEAIP (253 aa). An ATP-binding site is contributed by 869 to 876; that stretch reads GVSGAGKT. Residues 1149-1363 form the ABC transmembrane type-2 2 domain; it reads AQYAACLWKQ…TLYGLLTSQF (215 aa). The next 7 helical transmembrane spans lie at 1168-1188, 1200-1220, 1245-1265, 1283-1303, 1313-1333, 1341-1363, and 1398-1418; these read YTAV…TICW, IFNA…TNAT, LPFA…QSLI, FLWY…YGMM, VAPI…GFMI, WWRW…TSQF, and VVAG…ALAI.

It belongs to the ABC transporter superfamily. ABCG family. PDR (TC 3.A.1.205) subfamily.

The protein resides in the membrane. May be a general defense protein. This Oryza sativa subsp. japonica (Rice) protein is ABC transporter G family member 31.